The chain runs to 112 residues: Nitrogen regulatory protein P-II (112 aa).

Y51 is subject to O-UMP-tyrosine.

It belongs to the P(II) protein family. Homotrimer.

Functionally, in nitrogen-limiting conditions, when the ratio of Gln to 2-ketoglutarate decreases, P-II is uridylylated to P-II-UMP. P-II-UMP allows the deadenylation of glutamine synthetase (GS), thus activating the enzyme. Conversely, in nitrogen excess P-II is deuridylated and promotes the adenylation of GS. P-II indirectly controls the transcription of the GS gene (glnA). P-II prevents NR-II-catalyzed conversion of NR-I to NR-I-phosphate, the transcriptional activator of glnA. When P-II is uridylylated to P-II-UMP, these events are reversed. The sequence is that of Nitrogen regulatory protein P-II (glnB) from Mycobacterium bovis (strain ATCC BAA-935 / AF2122/97).